We begin with the raw amino-acid sequence, 96 residues long: MIALNTLAILSVASLAFAADGGAGDGLVLFGAAIGMAIAAAGCGIGQGMGLKAACEGTARNPEAGGKIMVTLILGLAFVESLAIYALVVNLMLLFR.

Transmembrane regions (helical) follow at residues 26-46 (GLVL…CGIG) and 68-88 (IMVT…YALV).

Belongs to the ATPase C chain family. In terms of assembly, F-type ATPases have 2 components, F(1) - the catalytic core - and F(0) - the membrane proton channel. F(1) has five subunits: alpha(3), beta(3), gamma(1), delta(1), epsilon(1). F(0) has three main subunits: a(1), b(2) and c(10-14). The alpha and beta chains form an alternating ring which encloses part of the gamma chain. F(1) is attached to F(0) by a central stalk formed by the gamma and epsilon chains, while a peripheral stalk is formed by the delta and b chains.

The protein resides in the cell inner membrane. Functionally, f(1)F(0) ATP synthase produces ATP from ADP in the presence of a proton or sodium gradient. F-type ATPases consist of two structural domains, F(1) containing the extramembraneous catalytic core and F(0) containing the membrane proton channel, linked together by a central stalk and a peripheral stalk. During catalysis, ATP synthesis in the catalytic domain of F(1) is coupled via a rotary mechanism of the central stalk subunits to proton translocation. Its function is as follows. Key component of the F(0) channel; it plays a direct role in translocation across the membrane. A homomeric c-ring of between 10-14 subunits forms the central stalk rotor element with the F(1) delta and epsilon subunits. The protein is ATP synthase subunit c of Oleidesulfovibrio alaskensis (strain ATCC BAA-1058 / DSM 17464 / G20) (Desulfovibrio alaskensis).